Here is a 442-residue protein sequence, read N- to C-terminus: Coiled-coil domain-containing protein 91 (442 aa).

Residues 1–16 are GGA1-binding motif; that stretch reads MDDDDFGGFEAAETFD. The segment at 1-27 is disordered; that stretch reads MDDDDFGGFEAAETFDGEQGGNQAVSP. S43 and S46 each carry phosphoserine. The segment at 48 to 79 is disordered; the sequence is ELILDHDRSSPSSGHLRSDAVISSPDDTRADS. Coiled-coil stretches lie at residues 127-213 and 248-409; these read GVHV…ALSI and CEEL…RLDQ. The segment at 211-414 is homodimerization; the sequence is LSIIVDEYKA…RRLDQVTRQR (204 aa).

Homodimer. Interacts with GGA1, GGA2 and AP1G1.

Its subcellular location is the membrane. It is found in the golgi apparatus. The protein resides in the trans-Golgi network membrane. It localises to the trans-Golgi network. Its function is as follows. Involved in the regulation of membrane traffic through the trans-Golgi network (TGN). Functions in close cooperation with the GGAs in the sorting of hydrolases to lysosomes. The sequence is that of Coiled-coil domain-containing protein 91 (Ccdc91) from Rattus norvegicus (Rat).